A 509-amino-acid chain; its full sequence is Sorting nexin MVP1 (509 aa).

The segment covering 1 to 25 has biased composition (polar residues); that stretch reads MDTYSGQNGWADTSNASPWGDTNDT. The segment at 1–28 is disordered; it reads MDTYSGQNGWADTSNASPWGDTNDTMPI. One can recognise a PX domain in the interval 126-245; that stretch reads QLDIISIEEI…TFLTVPTDLT (120 aa). 4 residues coordinate a 1,2-diacyl-sn-glycero-3-phospho-(1D-myo-inositol-3-phosphate): Arg170, Ser172, Lys196, and Arg211.

It belongs to the sorting nexin family.

It localises to the cytoplasm. The protein localises to the membrane. In terms of biological role, required for vacuolar protein sorting. The protein is Sorting nexin MVP1 (MVP1) of Candida glabrata (strain ATCC 2001 / BCRC 20586 / JCM 3761 / NBRC 0622 / NRRL Y-65 / CBS 138) (Yeast).